A 119-amino-acid polypeptide reads, in one-letter code: Thrombin-like enzyme TLBan (119 aa).

Residues 1-112 (VIGGDECNIN…YLLWIQSIIA (112 aa)) form the Peptidase S1 domain. Active-site charge relay system residues include H40 and D59. A disulfide bridge connects residues C54 and C118.

In terms of assembly, monomer. In terms of processing, contains both N-linked carbohydrates and sialic acid. In terms of tissue distribution, expressed by the venom gland.

It is found in the secreted. With respect to regulation, strongly inhibited by PMSF and slightly inhibited by EDTA and soybean trypsin inhibitor. In terms of biological role, thrombin-like snake venom serine protease, with high clotting activity in vitro. Also has fibrinogenolytic ability, showing a fast degradation of fibrinogen Aalpha chain (FGA), a slow degradation of Bbeta chain (FGB) and no degradation of gamma chain. Also causes platelet aggregation in platelet rich plasma (PRP) and washed platelet suspension. The protein is Thrombin-like enzyme TLBan of Bothrocophias andianus (Andean lancehead).